The sequence spans 551 residues: Tetrachloroethene reductive dehalogenase (551 aa).

The segment at residues 1–39 is a signal peptide (tat-type signal); the sequence is MGEINRRNFLKASMLGAAAAAVASASAVKGMVSPLVADA. One can recognise a 4Fe-4S ferredoxin-type 1 domain in the interval 411-440; the sequence is PRKFGVREFCRLCKKCADACPAQAISHEKD. Residues Cys420, Cys423, Cys426, Cys430, Cys467, Cys478, Cys481, and Cys485 each contribute to the [4Fe-4S] cluster site. In terms of domain architecture, 4Fe-4S ferredoxin-type 2 spans 478-496; it reads CANCVAVCSWNKVETWNHD.

This sequence belongs to the PceA family. Monomer. [4Fe-4S] cluster is required as a cofactor. The cofactor is corrinoid. Post-translationally, predicted to be exported by the Tat system. The position of the signal peptide cleavage has been experimentally proven.

It is found in the cell membrane. The catalysed reaction is trichloroethene + chloride + A + H(+) = tetrachloroethene + AH2. It carries out the reaction trichloroethene + AH2 = (Z)-1,2-dichloroethene + chloride + A + H(+). Activity is inhibited by ammonium ions. Photoreversibly inactivated by 1-iodopropane. Functionally, catalyzes the reductive dechlorination of tetrachloroethene (PCE) to trichloroethene (TCE) and of trichloroethene to cis-1,2-dichloroethene (DCE). Can also use trichlorofluoroethene, tetrachloromethane, hexachloroethane, tetrachloroethane, trichloroethane and 1,1,1-trichloro-2,2,2-trifluoroethane. Menaquinone can act as the electron donor. Reduced methyl viologen can act as the artificial electron donor. The protein is Tetrachloroethene reductive dehalogenase of Dehalobacter restrictus (strain DSM 9455 / PER-K23).